The following is a 98-amino-acid chain: Endoribonuclease antitoxin GhoS (98 aa).

In terms of assembly, monomer. In terms of processing, unlike other TA antitoxins, this protein is stable.

Antitoxin component of a type V toxin-antitoxin (TA) system. Neutralizes the toxic effects of toxin GhoT by digesting ghoT transcripts in a sequence-specific manner. In concert with GhoT is involved in reducing cell growth during antibacterial stress. The chain is Endoribonuclease antitoxin GhoS from Escherichia coli O157:H7.